Consider the following 119-residue polypeptide: Protein MRP-126 (119 aa).

2 EF-hand domains span residues D23–V58 and K59–A94. Residues T37, E42, D72, N74, D76, Q78, and E83 each coordinate Ca(2+).

Belongs to the S-100 family. Expressed in v-myb-transformed myelomonocytic cells.

This Gallus gallus (Chicken) protein is Protein MRP-126.